Reading from the N-terminus, the 314-residue chain is Ribosomal protein L11 methyltransferase (314 aa).

S-adenosyl-L-methionine is bound by residues T163, G184, D206, and N248.

This sequence belongs to the methyltransferase superfamily. PrmA family.

The protein resides in the cytoplasm. It catalyses the reaction L-lysyl-[protein] + 3 S-adenosyl-L-methionine = N(6),N(6),N(6)-trimethyl-L-lysyl-[protein] + 3 S-adenosyl-L-homocysteine + 3 H(+). Functionally, methylates ribosomal protein L11. The chain is Ribosomal protein L11 methyltransferase from Lactobacillus delbrueckii subsp. bulgaricus (strain ATCC 11842 / DSM 20081 / BCRC 10696 / JCM 1002 / NBRC 13953 / NCIMB 11778 / NCTC 12712 / WDCM 00102 / Lb 14).